Consider the following 984-residue polypeptide: Putative formate dehydrogenase SA2102 (984 aa).

A 2Fe-2S ferredoxin-type domain is found at 3–79; the sequence is EHLVVTLDGK…PMTVNTVNND (77 aa). Residues Cys37, Cys48, Cys51, and Cys63 each contribute to the [2Fe-2S] cluster site. The 4Fe-4S His(Cys)3-ligated-type domain maps to 79 to 119; the sequence is DVKDAQKEALDRILEKHMLYCTVCDYNNGDCEIHNTMDAWG. [4Fe-4S] cluster-binding residues include His95, Cys99, Cys102, Cys109, Cys147, Cys150, Cys153, Cys157, Cys190, Cys193, Cys196, Cys200, Cys264, Cys267, Cys271, and Cys299. 2 consecutive 4Fe-4S ferredoxin-type domains span residues 138–165 and 181–211; these read PFYR…VNET and NDVP…VNME. The tract at residues 252–984 is formate dehydrogenase; it reads MRKERIKKTK…YVFPGNQVDK (733 aa). The 57-residue stretch at 257 to 313 folds into the 4Fe-4S Mo/W bis-MGD-type domain; sequence IKKTKTVCTYCGVGCSFEVWTKDREILKVQPSHDSPANKIATCVKGKFSWGHINSDQ.

This sequence in the C-terminal section; belongs to the prokaryotic molybdopterin-containing oxidoreductase family. The cofactor is [2Fe-2S] cluster. [4Fe-4S] cluster serves as cofactor. Requires Mo-bis(molybdopterin guanine dinucleotide) as cofactor.

It catalyses the reaction formate + NAD(+) = CO2 + NADH. This is Putative formate dehydrogenase SA2102 from Staphylococcus aureus (strain N315).